The primary structure comprises 250 residues: Peptidyl-tRNA hydrolase (250 aa).

Residue tyrosine 14 coordinates tRNA. Residue histidine 19 is the Proton acceptor of the active site. Residues phenylalanine 64, asparagine 66, and asparagine 112 each contribute to the tRNA site. The disordered stretch occupies residues 192–250 (MGDGNQRPGGVKTDPAQLEKAPPKAQSHIRQARQNQKKPNIPESGPMAEMLKKLLGKKD). The span at 219-229 (HIRQARQNQKK) shows a compositional bias: polar residues. Residues 241 to 250 (MLKKLLGKKD) show a composition bias toward basic and acidic residues.

It belongs to the PTH family. As to quaternary structure, monomer.

Its subcellular location is the cytoplasm. The enzyme catalyses an N-acyl-L-alpha-aminoacyl-tRNA + H2O = an N-acyl-L-amino acid + a tRNA + H(+). In terms of biological role, hydrolyzes ribosome-free peptidyl-tRNAs (with 1 or more amino acids incorporated), which drop off the ribosome during protein synthesis, or as a result of ribosome stalling. Functionally, catalyzes the release of premature peptidyl moieties from peptidyl-tRNA molecules trapped in stalled 50S ribosomal subunits, and thus maintains levels of free tRNAs and 50S ribosomes. The sequence is that of Peptidyl-tRNA hydrolase from Brucella suis (strain ATCC 23445 / NCTC 10510).